The chain runs to 418 residues: Tyrosine--tRNA ligase (418 aa).

Residue Y34 participates in L-tyrosine binding. Positions 39–48 (PTADSLHLGH) match the 'HIGH' region motif. Y169 and Q173 together coordinate L-tyrosine. Positions 229 to 233 (KFGKS) match the 'KMSKS' region motif. Residue K232 coordinates ATP. Residues 352–418 (HNIVEILVAA…GKKKYAVLTY (67 aa)) enclose the S4 RNA-binding domain.

It belongs to the class-I aminoacyl-tRNA synthetase family. TyrS type 1 subfamily. In terms of assembly, homodimer.

It is found in the cytoplasm. It carries out the reaction tRNA(Tyr) + L-tyrosine + ATP = L-tyrosyl-tRNA(Tyr) + AMP + diphosphate + H(+). Functionally, catalyzes the attachment of tyrosine to tRNA(Tyr) in a two-step reaction: tyrosine is first activated by ATP to form Tyr-AMP and then transferred to the acceptor end of tRNA(Tyr). In Streptococcus pyogenes serotype M49 (strain NZ131), this protein is Tyrosine--tRNA ligase.